We begin with the raw amino-acid sequence, 339 residues long: Glycerol-3-phosphate dehydrogenase [NAD(P)+] (339 aa).

3 residues coordinate NADPH: serine 11, tryptophan 12, and lysine 109. The sn-glycerol 3-phosphate site is built by lysine 109, glycine 140, and serine 142. Alanine 144 is an NADPH binding site. Residues lysine 195, aspartate 249, serine 259, arginine 260, and asparagine 261 each contribute to the sn-glycerol 3-phosphate site. Lysine 195 (proton acceptor) is an active-site residue. Arginine 260 is an NADPH binding site. Valine 284 and glutamate 286 together coordinate NADPH.

The protein belongs to the NAD-dependent glycerol-3-phosphate dehydrogenase family.

It is found in the cytoplasm. It carries out the reaction sn-glycerol 3-phosphate + NAD(+) = dihydroxyacetone phosphate + NADH + H(+). The catalysed reaction is sn-glycerol 3-phosphate + NADP(+) = dihydroxyacetone phosphate + NADPH + H(+). It participates in membrane lipid metabolism; glycerophospholipid metabolism. In terms of biological role, catalyzes the reduction of the glycolytic intermediate dihydroxyacetone phosphate (DHAP) to sn-glycerol 3-phosphate (G3P), the key precursor for phospholipid synthesis. The protein is Glycerol-3-phosphate dehydrogenase [NAD(P)+] of Lactobacillus helveticus (strain DPC 4571).